A 1252-amino-acid polypeptide reads, in one-letter code: DNA-directed RNA polymerase subunit beta (1252 aa).

It belongs to the RNA polymerase beta chain family. As to quaternary structure, the RNAP catalytic core consists of 2 alpha, 1 beta, 1 beta' and 1 omega subunit. When a sigma factor is associated with the core the holoenzyme is formed, which can initiate transcription.

The catalysed reaction is RNA(n) + a ribonucleoside 5'-triphosphate = RNA(n+1) + diphosphate. DNA-dependent RNA polymerase catalyzes the transcription of DNA into RNA using the four ribonucleoside triphosphates as substrates. The protein is DNA-directed RNA polymerase subunit beta of Chlamydia trachomatis serovar L2 (strain ATCC VR-902B / DSM 19102 / 434/Bu).